The primary structure comprises 793 residues: Putative potassium transporter 8 (793 aa).

At 1-22 the chain is on the cytoplasmic side; the sequence is MDLEFGRGMRSPQRDSWKTTLL. The helical transmembrane segment at 23-43 threads the bilayer; that stretch reads LAYQSLGVVYGDLSISPLYVF. Topologically, residues 44–59 are extracellular; the sequence is KSTFAEDIQHSETNEE. Residues 60–80 form a helical membrane-spanning segment; the sequence is IFGVLSFVFWTLTLIPLIKYV. At 81 to 151 the chain is on the cytoplasmic side; sequence SIVLRADDNG…EKHKKLHTAL (71 aa). The helical transmembrane segment at 152–172 threads the bilayer; sequence LIMVLIGTCMVIGDGVLTPAI. The Extracellular segment spans residues 173 to 191; sequence SVFSAVSGLEFSLSKDHRE. Residues 192–212 form a helical membrane-spanning segment; it reads YAVIPITCVILAFLFALQHYG. Residues 213-215 lie on the Cytoplasmic side of the membrane; it reads THR. A helical membrane pass occupies residues 216 to 236; it reads VGFLFAPIVLAWLICMSALGL. At 237-264 the chain is on the extracellular side; the sequence is YNIIHWNPHVYQALNPCYMFKFLKKTRK. Residues 265–285 form a helical membrane-spanning segment; that stretch reads YGWMSLGGILLCMTGSEAMFA. Residues 286–292 are Cytoplasmic-facing; that stretch reads DLGHFSY. The chain crosses the membrane as a helical span at residues 293 to 313; the sequence is SAIQLAFTSLVYPALILAYMG. At 314–343 the chain is on the extracellular side; it reads QAAYLSKHHDFYSNSQVGFYIAVPDKVRWP. The helical transmembrane segment at 344-364 threads the bilayer; sequence VLVLAILASVVGSQAIISGTF. Residues 365 to 391 lie on the Cytoplasmic side of the membrane; it reads SIINQSQSLSCFPRVKVVHTSDKIHGQ. Residues 392 to 412 traverse the membrane as a helical segment; the sequence is IYIPEINWLLMILCIAVTVGF. The Extracellular segment spans residues 413-422; the sequence is RDTKHMGNAS. A glycan (N-linked (GlcNAc...) asparagine) is linked at Asn420. The helical transmembrane segment at 423-443 threads the bilayer; sequence GLAVITVMLVTTCLTSLVIML. The Cytoplasmic portion of the chain corresponds to 444 to 448; the sequence is CWRRP. The chain crosses the membrane as a helical span at residues 449-469; the sequence is PVLALCFLLFFGSVEALYFSA. At 470–473 the chain is on the extracellular side; that stretch reads SLIK. The helical transmembrane segment at 474–494 threads the bilayer; the sequence is FLEGAWLPILLALFLMAVMLV. At 495–793 the chain is on the cytoplasmic side; that stretch reads WHYTTIKKYE…LLEVGMVYVL (299 aa). The span at 664–675 shows a compositional bias: polar residues; sequence DSVQHSSAASVE. A disordered region spans residues 664–698; it reads DSVQHSSAASVETTTTRRRSGGGDDDGSPGGGGGR.

This sequence belongs to the HAK/KUP transporter (TC 2.A.72.3) family.

The protein resides in the membrane. High-affinity potassium transporter. This chain is Putative potassium transporter 8 (HAK8), found in Oryza sativa subsp. japonica (Rice).